The sequence spans 601 residues: Elongation factor 4 (601 aa).

The 183-residue stretch at 7–189 folds into the tr-type G domain; sequence RNIRNFSIIA…AIVHRIPPPK (183 aa). Residues 19–24 and 136–139 contribute to the GTP site; these read DHGKST and NKID.

Belongs to the TRAFAC class translation factor GTPase superfamily. Classic translation factor GTPase family. LepA subfamily.

It localises to the cell inner membrane. The enzyme catalyses GTP + H2O = GDP + phosphate + H(+). Required for accurate and efficient protein synthesis under certain stress conditions. May act as a fidelity factor of the translation reaction, by catalyzing a one-codon backward translocation of tRNAs on improperly translocated ribosomes. Back-translocation proceeds from a post-translocation (POST) complex to a pre-translocation (PRE) complex, thus giving elongation factor G a second chance to translocate the tRNAs correctly. Binds to ribosomes in a GTP-dependent manner. This Xanthomonas campestris pv. campestris (strain ATCC 33913 / DSM 3586 / NCPPB 528 / LMG 568 / P 25) protein is Elongation factor 4.